Consider the following 396-residue polypeptide: Coiled-coil domain-containing protein 1 (396 aa).

The N-terminal stretch at 1–21 (MAARSALCFLAIITLFVYACG) is a signal peptide. Coiled-coil stretches lie at residues 53-73 (KIDS…NDRD), 109-129 (EVEK…DIID), 208-242 (DKES…ILDT), and 287-308 (YEEI…IDEH). Residues 231–256 (DANDDVNDILDTDDEDEDEDVQEEKD) show a composition bias toward acidic residues. Disordered regions lie at residues 231-260 (DAND…EDIH) and 288-378 (EEIE…VADD).

In terms of tissue distribution, component of the acid-insoluble and acid-soluble organic matrix of calcified layers of the shell (at protein level).

It localises to the secreted. This is Coiled-coil domain-containing protein 1 from Lottia gigantea (Giant owl limpet).